Consider the following 159-residue polypeptide: Ribosomal RNA large subunit methyltransferase H (159 aa).

Residues L76, G108, and 127–132 contribute to the S-adenosyl-L-methionine site; that span reads FGRLTL.

This sequence belongs to the RNA methyltransferase RlmH family. As to quaternary structure, homodimer.

It localises to the cytoplasm. It carries out the reaction pseudouridine(1915) in 23S rRNA + S-adenosyl-L-methionine = N(3)-methylpseudouridine(1915) in 23S rRNA + S-adenosyl-L-homocysteine + H(+). Its function is as follows. Specifically methylates the pseudouridine at position 1915 (m3Psi1915) in 23S rRNA. The sequence is that of Ribosomal RNA large subunit methyltransferase H from Listeria welshimeri serovar 6b (strain ATCC 35897 / DSM 20650 / CCUG 15529 / CIP 8149 / NCTC 11857 / SLCC 5334 / V8).